A 72-amino-acid chain; its full sequence is Translation initiation factor IF-1 (72 aa).

The 72-residue stretch at Met-1–Lys-72 folds into the S1-like domain.

It belongs to the IF-1 family. As to quaternary structure, component of the 30S ribosomal translation pre-initiation complex which assembles on the 30S ribosome in the order IF-2 and IF-3, IF-1 and N-formylmethionyl-tRNA(fMet); mRNA recruitment can occur at any time during PIC assembly.

The protein localises to the cytoplasm. In terms of biological role, one of the essential components for the initiation of protein synthesis. Stabilizes the binding of IF-2 and IF-3 on the 30S subunit to which N-formylmethionyl-tRNA(fMet) subsequently binds. Helps modulate mRNA selection, yielding the 30S pre-initiation complex (PIC). Upon addition of the 50S ribosomal subunit IF-1, IF-2 and IF-3 are released leaving the mature 70S translation initiation complex. This Chlorobium luteolum (strain DSM 273 / BCRC 81028 / 2530) (Pelodictyon luteolum) protein is Translation initiation factor IF-1.